A 762-amino-acid chain; its full sequence is Probable disease resistance protein At1g61300 (762 aa).

A lipid anchor (N-myristoyl glycine) is attached at glycine 2. S-palmitoyl cysteine attachment occurs at residues cysteine 3 and cysteine 4. The region spanning 26-329 is the NB-ARC domain; that stretch reads NINRNSFGVE…CEGFIGEDQV (304 aa). 68 to 75 provides a ligand contact to ATP; sequence GMGGVGKT. LRR repeat units lie at residues 401–422, 423–444, 447–470, 471–493, and 494–516; these read AVRRMSLMDNHIEEITCESKCS, ELTTLFLQSNQLKNLSGEFIRY, KLVVLDLSYNRDFNKLPEQISGLV, SLQFLDLSNTSIKQLPVGLKKLK, and KLTFLNLAYTVRLCSISGISRLL.

This sequence belongs to the disease resistance NB-LRR family.

It is found in the cell membrane. Probable disease resistance protein. The sequence is that of Probable disease resistance protein At1g61300 from Arabidopsis thaliana (Mouse-ear cress).